A 246-amino-acid chain; its full sequence is Bis(5'-nucleosyl)-tetraphosphatase PrpE [asymmetrical] (246 aa).

This sequence belongs to the PrpE family. The cofactor is Ni(2+).

It carries out the reaction P(1),P(4)-bis(5'-guanosyl) tetraphosphate + H2O = GMP + GTP + 2 H(+). In terms of biological role, asymmetrically hydrolyzes Ap4p to yield AMP and ATP. This is Bis(5'-nucleosyl)-tetraphosphatase PrpE [asymmetrical] from Bacillus anthracis (strain A0248).